The following is a 1939-amino-acid chain: Myosin-1 (1939 aa).

A Myosin N-terminal SH3-like domain is found at D33–P82. A phosphothreonine mark is found at T64 and T69. Residues D86–D782 form the Myosin motor domain. K130 carries the N6,N6,N6-trimethyllysine modification. G179–T186 contacts ATP. Y389 carries the post-translational modification Phosphotyrosine. The residue at position 419 (T419) is a Phosphothreonine. Y424 carries the post-translational modification Phosphotyrosine. Residues L659–E681 form an actin-binding region. The residue at position 757 (H757) is a Pros-methylhistidine. An actin-binding region spans residues K761–G775. The 30-residue stretch at L785–S814 folds into the IQ domain. Residues L843 to E1939 are a coiled coil. Phosphoserine occurs at positions 1092, 1096, 1162, and 1237. Residue T1241 is modified to Phosphothreonine. S1243 and S1261 each carry phosphoserine. Phosphothreonine is present on residues T1265 and T1286. Phosphoserine occurs at positions 1288, 1292, 1303, and 1306. Phosphothreonine is present on T1467. The residue at position 1474 (S1474) is a Phosphoserine. Y1492 carries the post-translational modification Phosphotyrosine. The residue at position 1495 (S1495) is a Phosphoserine. T1501 bears the Phosphothreonine mark. The residue at position 1514 (S1514) is a Phosphoserine. Position 1517 is a phosphothreonine (T1517). Phosphoserine is present on residues S1542, S1554, S1574, S1600, S1603, S1714, and S1726. A phosphothreonine mark is found at T1730 and T1736. S1739 is subject to Phosphoserine.

Belongs to the TRAFAC class myosin-kinesin ATPase superfamily. Myosin family. Muscle myosin is a hexameric protein that consists of 2 heavy chain subunits (MHC), 2 alkali light chain subunits (MLC) and 2 regulatory light chain subunits (MLC-2). Interacts with SLC26A5.

It localises to the cytoplasm. The protein localises to the myofibril. Required for normal hearing. It plays a role in cochlear amplification of auditory stimuli, likely through the positive regulation of prestin (SLC26A5) activity and outer hair cell (OHC) electromotility. The polypeptide is Myosin-1 (Homo sapiens (Human)).